The primary structure comprises 134 residues: Ribosome-binding factor A (134 aa).

The segment at 115–134 (EDQRQERGEIPPGSDELQPD) is disordered.

The protein belongs to the RbfA family. As to quaternary structure, monomer. Binds 30S ribosomal subunits, but not 50S ribosomal subunits or 70S ribosomes.

It is found in the cytoplasm. One of several proteins that assist in the late maturation steps of the functional core of the 30S ribosomal subunit. Associates with free 30S ribosomal subunits (but not with 30S subunits that are part of 70S ribosomes or polysomes). Required for efficient processing of 16S rRNA. May interact with the 5'-terminal helix region of 16S rRNA. This Synechococcus sp. (strain CC9902) protein is Ribosome-binding factor A.